Here is a 152-residue protein sequence, read N- to C-terminus: UPF0260 protein BAB1_1496 (152 aa).

The protein belongs to the UPF0260 family.

The polypeptide is UPF0260 protein BAB1_1496 (Brucella abortus (strain 2308)).